Reading from the N-terminus, the 943-residue chain is MSSVSSDIDGPPETKRFRIDVDTQVGIDTPSVSTNCAPPVAGEASQDGQSPAAPSSASYRSSNSSVISSSESPIKDEDVDVHDGQDDTEDIAMDVSGSTGSIVNNSEIFEMLNKTFGGVFNCDLEGIMRPSALMHPSSPPTPIQSAGIPGALAVAQSPAAQLFSGDDWSWHRNPAASIRSGGTNKQTPVWKYFVYNKTENLSRCIVGDCTYMLKGPHTSTLACHLKKHTREYSEFQKLKTEYSRTKLDQQPKIPDGAPHPLTLQTQNTPRQTGSPASTCNTNSNTSSSVSSGSGIGSGSGSTMDLSMKKPKKEPSSAKLNEMLFNGLRQATNNSNGSPPTTPHAPQLPNIPSFVTNMMLQMNPLHMMLAQSLPGATPPTPTSSNAGLNALQQAGLTLAANGQIIQSKKWRNDDKKQKELCTKFALALATSHVDFEVVQNPLWKEVFEMAQPKFSIPTESQYEHIVNSTSHKLIQSLKSQLSASKKLNLLLDITKITADISRVTVSVALTGGAGNSYETQVILLAFRNINGNQSEDLTAVFEKVLQDYNISPSSINRVICSGLNELAEPAELPKQMDSFSSRLANCFKSWLETSPTVEVLKKNVYAMLVSYLTVPAAIQLASQMLKAKFEVPLTEPFHVIVEHLVAHRDIYQMNMEGITLISEREWNKVTGIHHLMNIFKPFMTYSTDMTTVDTVIPTIVQIQNVLEKDIYHLGDIGSDLLTSLKQTVAPIMNPEHENFDSTYIQATALNPQLAVTLTSDQMTTAKSLIETEISRRTKKMRKAQSDKKLAMGVDSLLANVMRKNDGGSDGGCETALAIYGDLFQSITGNSSESKENIVNQYFDEISSTTSVESMFMLRTFGNPMQAPLSYWKSCSSRCSELSDLATELLSIPIFTLTAERVLSFSPDSSSLNTNLILTNLDSTDQFEKQVLLRFNRQIVSKLFN.

The segment at 1-99 (MSSVSSDIDG…DIAMDVSGST (99 aa)) is disordered. Basic and acidic residues predominate over residues 12–21 (PETKRFRIDV). The span at 50–72 (SPAAPSSASYRSSNSSVISSSES) shows a compositional bias: low complexity. Basic and acidic residues predominate over residues 73–85 (PIKDEDVDVHDGQ). Residues 184–235 (NKQTPVWKYFVYNKTENLSRCIVGDCTYMLKGPHTSTLACHLKKHTREYSEF) form a BED-type; degenerate zinc finger. Disordered stretches follow at residues 242–315 (YSRT…KEPS) and 328–348 (RQAT…PQLP). Residues 262–276 (TLQTQNTPRQTGSPA) are compositionally biased toward polar residues. Over residues 277–292 (STCNTNSNTSSSVSSG) the composition is skewed to low complexity. Residues 328-338 (RQATNNSNGSP) are compositionally biased toward polar residues.

As to expression, expressed in distal tip cells and in germline cells.

Its subcellular location is the nucleus. The protein resides in the cytoplasm. Its function is as follows. Regulates the timing and orientation of distal tip cell migration during gonadal development. May act in parallel to cacn-1 and Rac GTPases to control the anterior and posterior migration of distal tip cells. This is Zinc finger BED domain-containing protein 39 from Caenorhabditis elegans.